A 126-amino-acid polypeptide reads, in one-letter code: Spermidine export protein MdtJ (126 aa).

The next 4 helical transmembrane spans lie at 1–21 (MMIY…GTLS), 32–52 (TGHI…ALAV), 55–75 (VALG…ITVF), and 82–102 (ESLS…IMLV). The segment at 104–126 (SGTRKPKKPNSPNRNSGEHHATA) is disordered.

It belongs to the drug/metabolite transporter (DMT) superfamily. Small multidrug resistance (SMR) (TC 2.A.7.1) family. MdtJ subfamily. In terms of assembly, forms a complex with MdtI.

The protein localises to the cell inner membrane. Its function is as follows. Catalyzes the excretion of spermidine. The polypeptide is Spermidine export protein MdtJ (Yersinia enterocolitica serotype O:8 / biotype 1B (strain NCTC 13174 / 8081)).